Reading from the N-terminus, the 63-residue chain is Putative antitoxin AF_1084 (63 aa).

It belongs to the UPF0165 family.

Functionally, possibly the antitoxin component of a type II toxin-antitoxin (TA) system. The protein is Putative antitoxin AF_1084 of Archaeoglobus fulgidus (strain ATCC 49558 / DSM 4304 / JCM 9628 / NBRC 100126 / VC-16).